The chain runs to 267 residues: 4-hydroxy-tetrahydrodipicolinate reductase (267 aa).

NAD(+) contacts are provided by residues 8-13 (GAAGRM) and E34. R35 lines the NADP(+) pocket. Residues 98–100 (GST) and 122–125 (APNM) contribute to the NAD(+) site. The active-site Proton donor/acceptor is the H155. H156 contributes to the (S)-2,3,4,5-tetrahydrodipicolinate binding site. K159 functions as the Proton donor in the catalytic mechanism. A (S)-2,3,4,5-tetrahydrodipicolinate-binding site is contributed by 165–166 (GT).

This sequence belongs to the DapB family.

The protein resides in the cytoplasm. The enzyme catalyses (S)-2,3,4,5-tetrahydrodipicolinate + NAD(+) + H2O = (2S,4S)-4-hydroxy-2,3,4,5-tetrahydrodipicolinate + NADH + H(+). It carries out the reaction (S)-2,3,4,5-tetrahydrodipicolinate + NADP(+) + H2O = (2S,4S)-4-hydroxy-2,3,4,5-tetrahydrodipicolinate + NADPH + H(+). Its pathway is amino-acid biosynthesis; L-lysine biosynthesis via DAP pathway; (S)-tetrahydrodipicolinate from L-aspartate: step 4/4. Its function is as follows. Catalyzes the conversion of 4-hydroxy-tetrahydrodipicolinate (HTPA) to tetrahydrodipicolinate. This Geotalea uraniireducens (strain Rf4) (Geobacter uraniireducens) protein is 4-hydroxy-tetrahydrodipicolinate reductase.